We begin with the raw amino-acid sequence, 607 residues long: Monocarboxylate transporter 7 (607 aa).

Positions 1 to 84 (MRASGQGPQR…PAETGCSRSR (84 aa)) are disordered. The Cytoplasmic portion of the chain corresponds to 1–105 (MRASGQGPQR…ANVYTQVPDG (105 aa)). Residues 106–126 (GWGWAVAVSFFFVEVFTYGII) form a helical membrane-spanning segment. Residues 127–146 (KSFGVFFNDLMDSFDESNSK) are Extracellular-facing. A helical transmembrane segment spans residues 147-167 (ISWIISICVFVLTFTAPLSTV). Over 168 to 175 (LSNRFGHR) the chain is Cytoplasmic. Residues 176-196 (LVVMAGGLLISLGMITASFSQ) form a helical membrane-spanning segment. Topologically, residues 197 to 202 (RVYHMY) are extracellular. The chain crosses the membrane as a helical span at residues 203 to 223 (ISIGVISGLGYCFSFLPTVTI). Residues 224 to 233 (LSQYFDKRRS) lie on the Cytoplasmic side of the membrane. A helical membrane pass occupies residues 234–254 (VVTAVASTGECFAVFAFAPAI). Residues 255–268 (TALKEHIGWRYSLL) are Extracellular-facing. A helical membrane pass occupies residues 269–289 (FVGLLQLNIMVCGALLRPIII). The Cytoplasmic portion of the chain corresponds to 290-383 (QGPGQSPKAV…KEKSFICYAL (94 aa)). Residues Ser-319, Ser-322, Ser-325, and Ser-332 each carry the phosphoserine modification. Residues 384–404 (FGLFATLGFFAPSLYIIPLGI) form a helical membrane-spanning segment. The Extracellular segment spans residues 405-414 (SLGIDPDRAA). Residues 415-435 (FLLSTMAIAEVFGRIGAGFVL) traverse the membrane as a helical segment. The Cytoplasmic portion of the chain corresponds to 436–442 (NREPIRK). Residues 443 to 463 (IYIELICVILLTASLFAFTFA) form a helical membrane-spanning segment. Topologically, residues 464-465 (TE) are extracellular. Residues 466–486 (FWGLMLCSVFFGSMVGTIGGT) form a helical membrane-spanning segment. At 487–507 (HIPMLAEDDVVGIEKMSSAAG) the chain is on the cytoplasmic side. Residues 508–528 (VYVFIQSISGLAGPPLAGLLV) traverse the membrane as a helical segment. At 529-536 (DQSKIYSR) the chain is on the extracellular side. Residues 537 to 557 (AFYSCAAGMCLAAVCLALVRP) form a helical membrane-spanning segment. Residues 558-607 (CKKGLCQNSHSGENQTDRQRGKALQDIPEDFLEMDLGKCEHRAHMKMDPV) are Cytoplasmic-facing.

This sequence belongs to the major facilitator superfamily. Monocarboxylate porter (TC 2.A.1.13) family. As to quaternary structure, forms functional complexes with BSG/CD147 or EMB/GP70 ancillary proteins.

It localises to the basolateral cell membrane. The catalysed reaction is taurine(out) = taurine(in). Monocarboxylate transporter selective for taurine. May associate with BSG/CD147 or EMB/GP70 ancillary proteins to mediate facilitative efflux or influx of taurine across the plasma membrane. The transport is pH- and sodium-independent. Rather low-affinity, is likely effective for taurine transport in tissues where taurine is present at high concentrations. The polypeptide is Monocarboxylate transporter 7 (Mus musculus (Mouse)).